The sequence spans 41 residues: Large ribosomal subunit protein bL36 (41 aa).

This sequence belongs to the bacterial ribosomal protein bL36 family.

The protein is Large ribosomal subunit protein bL36 of Beijerinckia indica subsp. indica (strain ATCC 9039 / DSM 1715 / NCIMB 8712).